Here is a 197-residue protein sequence, read N- to C-terminus: Glycerol-3-phosphate acyltransferase (197 aa).

Transmembrane regions (helical) follow at residues 6–26 (LFIV…AIIV), 58–78 (AITL…AHYL), 82–102 (MLNV…PIFF), 116–136 (ALLA…VFVA), and 157–177 (FYLI…CLWI).

It belongs to the PlsY family. Probably interacts with PlsX.

The protein resides in the cell inner membrane. It catalyses the reaction an acyl phosphate + sn-glycerol 3-phosphate = a 1-acyl-sn-glycero-3-phosphate + phosphate. Its pathway is lipid metabolism; phospholipid metabolism. Functionally, catalyzes the transfer of an acyl group from acyl-phosphate (acyl-PO(4)) to glycerol-3-phosphate (G3P) to form lysophosphatidic acid (LPA). This enzyme utilizes acyl-phosphate as fatty acyl donor, but not acyl-CoA or acyl-ACP. The polypeptide is Glycerol-3-phosphate acyltransferase (Ruthia magnifica subsp. Calyptogena magnifica).